The sequence spans 418 residues: Gamma-glutamyl phosphate reductase (418 aa).

The protein belongs to the gamma-glutamyl phosphate reductase family.

It localises to the cytoplasm. It catalyses the reaction L-glutamate 5-semialdehyde + phosphate + NADP(+) = L-glutamyl 5-phosphate + NADPH + H(+). The protein operates within amino-acid biosynthesis; L-proline biosynthesis; L-glutamate 5-semialdehyde from L-glutamate: step 2/2. In terms of biological role, catalyzes the NADPH-dependent reduction of L-glutamate 5-phosphate into L-glutamate 5-semialdehyde and phosphate. The product spontaneously undergoes cyclization to form 1-pyrroline-5-carboxylate. This chain is Gamma-glutamyl phosphate reductase, found in Histophilus somni (strain 2336) (Haemophilus somnus).